The chain runs to 357 residues: MDQLLASVHAAGHSFLGDYWLLVWTLVKIVAVVLPLMGCVAYLTLWERKVIGWMHVRHGPNRTGPAGLLQPIADALKLLLKEIVVPAKSSKALFVIAPIMTIMPALAAWAVIPFGPEAALANVNAGLLFVMAITSLEVYGVIVAGWASNSKYAFLGAMRASAQMISYEIAMGFVLVIVLMVSGSLNLSEIVMLQTSGRFADMGLTFLSWNWLPLLPMFVIYIISGTAELNRHPFDVVEGESEIVAGHMVEYSGMSFAMFFLAEYANMILISMMATLMFLGGWSSPIDAMPFTWIPGWIWLGIKTLFVVTLFIWFRASFPRYRYDQIMRLGWKVFIPLTLVYLLIVAIWMKTPWNIWH.

The next 8 helical transmembrane spans lie at 20 to 40 (WLLV…MGCV), 92 to 112 (ALFV…WAVI), 127 to 147 (LLFV…AGWA), 165 to 185 (ISYE…SGSL), 203 to 223 (GLTF…IYII), 259 to 279 (FFLA…LMFL), 294 to 314 (IPGW…FIWF), and 329 to 349 (LGWK…AIWM).

It belongs to the complex I subunit 1 family. NDH-1 is composed of 14 different subunits. Subunits NuoA, H, J, K, L, M, N constitute the membrane sector of the complex.

The protein resides in the cell inner membrane. The catalysed reaction is a quinone + NADH + 5 H(+)(in) = a quinol + NAD(+) + 4 H(+)(out). NDH-1 shuttles electrons from NADH, via FMN and iron-sulfur (Fe-S) centers, to quinones in the respiratory chain. The immediate electron acceptor for the enzyme in this species is believed to be ubiquinone. Couples the redox reaction to proton translocation (for every two electrons transferred, four hydrogen ions are translocated across the cytoplasmic membrane), and thus conserves the redox energy in a proton gradient. This subunit may bind ubiquinone. This is NADH-quinone oxidoreductase subunit H from Herminiimonas arsenicoxydans.